The chain runs to 303 residues: RELT-like protein 2 (303 aa).

Residues 15 to 35 (LYMLFLLVLVFFLMGLVGFMI) form a helical membrane-spanning segment. 2 disordered regions span residues 46–67 (CRTS…DDDM) and 111–303 (SSLQ…AGGV). Residue Ser-52 is modified to Phosphoserine. 2 stretches are compositionally biased toward basic and acidic residues: residues 148–158 (RSKEGKSRPRP) and 172–188 (THIE…DGSP). The segment covering 194–212 (GSGGGQDPGGGQGPGGGQP) has biased composition (gly residues).

This sequence belongs to the RELT family. Interacts with RELT, RELL1, OXSR1, PLSCR1 and TRAF2.

The protein resides in the cell membrane. Induces activation of MAPK14/p38 cascade, when overexpressed. Induces apoptosis, when overexpressed. This is RELT-like protein 2 (RELL2) from Bos taurus (Bovine).